Here is a 306-residue protein sequence, read N- to C-terminus: Non-specific ribonucleoside hydrolase RihC (306 aa).

Residue His-235 is part of the active site.

Belongs to the IUNH family. RihC subfamily.

Hydrolyzes both purine and pyrimidine ribonucleosides with a broad-substrate specificity. The chain is Non-specific ribonucleoside hydrolase RihC from Salmonella typhi.